We begin with the raw amino-acid sequence, 244 residues long: Venom nerve growth factor 3 (244 aa).

Positions 1–18 (MSMLCYTLIIAFLIGIWA) are cleaved as a signal peptide. The propeptide occupies 19 to 125 (APKSEDNVPL…TLNRNIRAKR (107 aa)). Residues 47-66 (GLKTSRNTDQRHPAPKKAED) are compositionally biased toward basic and acidic residues. Residues 47–67 (GLKTSRNTDQRHPAPKKAEDQ) form a disordered region. Intrachain disulfides connect C139-C205, C181-C233, and C193-C235.

This sequence belongs to the NGF-beta family. As to quaternary structure, homodimer; non-covalently linked. In terms of tissue distribution, expressed by the venom gland.

The protein resides in the secreted. Nerve growth factor is important for the development and maintenance of the sympathetic and sensory nervous systems. It stimulates division and differentiation of sympathetic and embryonic sensory neurons as well as basal forebrain cholinergic neurons in the brain. Its relevance in the snake venom is not clear. However, it has been shown to inhibit metalloproteinase-dependent proteolysis of platelet glycoprotein Ib alpha, suggesting a metalloproteinase inhibition to prevent metalloprotease autodigestion and/or protection against prey proteases. Binds a lipid between the two protein chains in the homodimer. The lipid-bound form promotes histamine relase from mouse mast cells, contrary to the lipid-free form. This Notechis scutatus scutatus (Mainland tiger snake) protein is Venom nerve growth factor 3.